The chain runs to 68 residues: 1-carboxybiuret hydrolase subunit AtzG (68 aa).

Heterotetramer consisting of 2 AtzE and 2 AtzG subunits.

Its pathway is xenobiotic degradation; atrazine degradation. Important for the activity of the AtzE subunit of 1-carboxybiuret hydrolase. The protein is 1-carboxybiuret hydrolase subunit AtzG of Pseudomonas sp. (strain ADP).